A 233-amino-acid chain; its full sequence is Rano class II histocompatibility antigen, A beta chain (233 aa).

Residues aspartate 1–glutamate 80 are beta-1. The Extracellular portion of the chain corresponds to aspartate 1 to lysine 194. Asparagine 14 carries an N-linked (GlcNAc...) asparagine glycan. Residues threonine 81–tryptophan 184 are beta-2. The region spanning proline 93–threonine 181 is the Ig-like C1-type domain. Residues arginine 185 to lysine 194 form a connecting peptide region. Residues methionine 195–isoleucine 215 traverse the membrane as a helical segment. The Cytoplasmic portion of the chain corresponds to arginine 216–glutamine 233.

Belongs to the MHC class II family.

It is found in the membrane. In terms of biological role, involved in the presentation of foreign antigens to the immune system. In Rattus norvegicus (Rat), this protein is Rano class II histocompatibility antigen, A beta chain (RT1-B).